A 448-amino-acid chain; its full sequence is N-succinylarginine dihydrolase (448 aa).

Substrate contacts are provided by residues 19–28, Asn-110, and 137–138; these read AGLSYGNVAS and HR. The active site involves Glu-174. Position 214 (Arg-214) interacts with substrate. The active site involves His-250. Substrate-binding residues include Asp-252 and Asn-364. Cys-370 acts as the Nucleophile in catalysis.

It belongs to the succinylarginine dihydrolase family. In terms of assembly, homodimer.

The enzyme catalyses N(2)-succinyl-L-arginine + 2 H2O + 2 H(+) = N(2)-succinyl-L-ornithine + 2 NH4(+) + CO2. Its pathway is amino-acid degradation; L-arginine degradation via AST pathway; L-glutamate and succinate from L-arginine: step 2/5. Functionally, catalyzes the hydrolysis of N(2)-succinylarginine into N(2)-succinylornithine, ammonia and CO(2). This chain is N-succinylarginine dihydrolase, found in Pseudoalteromonas translucida (strain TAC 125).